Consider the following 156-residue polypeptide: Putative HTH-type transcriptional regulator YffB (156 aa).

The HTH rrf2-type domain maps to 2–137 (KLSSGWEQSV…SNVSLAQVAD (136 aa)).

The protein is Putative HTH-type transcriptional regulator YffB (yffB) of Lactococcus lactis subsp. lactis (strain IL1403) (Streptococcus lactis).